Reading from the N-terminus, the 510-residue chain is Bifunctional purine biosynthesis protein PurH (510 aa).

In terms of domain architecture, MGS-like spans methionine 1–valine 145.

Belongs to the PurH family.

The enzyme catalyses (6R)-10-formyltetrahydrofolate + 5-amino-1-(5-phospho-beta-D-ribosyl)imidazole-4-carboxamide = 5-formamido-1-(5-phospho-D-ribosyl)imidazole-4-carboxamide + (6S)-5,6,7,8-tetrahydrofolate. It carries out the reaction IMP + H2O = 5-formamido-1-(5-phospho-D-ribosyl)imidazole-4-carboxamide. Its pathway is purine metabolism; IMP biosynthesis via de novo pathway; 5-formamido-1-(5-phospho-D-ribosyl)imidazole-4-carboxamide from 5-amino-1-(5-phospho-D-ribosyl)imidazole-4-carboxamide (10-formyl THF route): step 1/1. The protein operates within purine metabolism; IMP biosynthesis via de novo pathway; IMP from 5-formamido-1-(5-phospho-D-ribosyl)imidazole-4-carboxamide: step 1/1. This is Bifunctional purine biosynthesis protein PurH from Lactiplantibacillus plantarum (strain ATCC BAA-793 / NCIMB 8826 / WCFS1) (Lactobacillus plantarum).